The sequence spans 83 residues: Small ribosomal subunit protein eS21 (83 aa).

It belongs to the eukaryotic ribosomal protein eS21 family. In terms of assembly, component of the 40S small ribosomal subunit.

It localises to the cytoplasm. The protein resides in the cytosol. It is found in the rough endoplasmic reticulum. The protein is Small ribosomal subunit protein eS21 (RpS21) of Ixodes scapularis (Black-legged tick).